A 57-amino-acid chain; its full sequence is DNA-directed RNA polymerase subunit Rpo6 (57 aa).

This sequence belongs to the archaeal Rpo6/eukaryotic RPB6 RNA polymerase subunit family. In terms of assembly, part of the RNA polymerase complex.

Its subcellular location is the cytoplasm. It catalyses the reaction RNA(n) + a ribonucleoside 5'-triphosphate = RNA(n+1) + diphosphate. Its function is as follows. DNA-dependent RNA polymerase (RNAP) catalyzes the transcription of DNA into RNA using the four ribonucleoside triphosphates as substrates. In Methanocaldococcus jannaschii (strain ATCC 43067 / DSM 2661 / JAL-1 / JCM 10045 / NBRC 100440) (Methanococcus jannaschii), this protein is DNA-directed RNA polymerase subunit Rpo6.